A 400-amino-acid polypeptide reads, in one-letter code: NADH-quinone oxidoreductase subunit D (400 aa).

Belongs to the complex I 49 kDa subunit family. NDH-1 is composed of 14 different subunits. Subunits NuoB, C, D, E, F, and G constitute the peripheral sector of the complex.

The protein resides in the cell inner membrane. The enzyme catalyses a quinone + NADH + 5 H(+)(in) = a quinol + NAD(+) + 4 H(+)(out). Functionally, NDH-1 shuttles electrons from NADH, via FMN and iron-sulfur (Fe-S) centers, to quinones in the respiratory chain. The immediate electron acceptor for the enzyme in this species is believed to be menaquinone. Couples the redox reaction to proton translocation (for every two electrons transferred, four hydrogen ions are translocated across the cytoplasmic membrane), and thus conserves the redox energy in a proton gradient. This chain is NADH-quinone oxidoreductase subunit D, found in Prosthecochloris aestuarii (strain DSM 271 / SK 413).